The primary structure comprises 149 residues: Large ribosomal subunit protein bL9 (149 aa).

This sequence belongs to the bacterial ribosomal protein bL9 family.

Its function is as follows. Binds to the 23S rRNA. This is Large ribosomal subunit protein bL9 from Haemophilus influenzae (strain PittGG).